Reading from the N-terminus, the 433-residue chain is Serine hydroxymethyltransferase (433 aa).

Residue 121–123 (AHV) coordinates (6S)-5,6,7,8-tetrahydrofolate. At Lys-227 the chain carries N6-(pyridoxal phosphate)lysine. Glu-243 serves as a coordination point for (6S)-5,6,7,8-tetrahydrofolate.

The protein belongs to the SHMT family. Homodimer. Pyridoxal 5'-phosphate serves as cofactor.

The protein localises to the cytoplasm. Its pathway is amino-acid biosynthesis; glycine biosynthesis; glycine from L-serine: step 1/1. Functionally, catalyzes the reversible interconversion of serine and glycine with a modified folate serving as the one-carbon carrier. Also exhibits a pteridine-independent aldolase activity toward beta-hydroxyamino acids, producing glycine and aldehydes, via a retro-aldol mechanism. In Saccharolobus islandicus (strain Y.N.15.51 / Yellowstone #2) (Sulfolobus islandicus), this protein is Serine hydroxymethyltransferase.